The chain runs to 489 residues: Inositol-pentakisphosphate 2-kinase (489 aa).

Positions 136–140 (EIKPK) match the EXKPK motif motif.

The protein belongs to the IPK1 type 2 family. As to expression, in brain, it is expressed throughout the hippocampus (CA1, CA2, CA3 and dentate gyrus), inner layers of the cerebral cortex, and Purkinje cells of the cerebellum. In heart, it is expressed in cardiomyocytes but not in interstitial cells, blood vessels, or valves. Also expressed in testis.

It localises to the cytoplasm. It is found in the nucleus. It carries out the reaction 1D-myo-inositol 1,3,4,5,6-pentakisphosphate + ATP = 1D-myo-inositol hexakisphosphate + ADP + H(+). Phosphorylates Ins(1,3,4,5,6)P5 at position 2 to form Ins(1,2,3,4,5,6)P6 (InsP6 or phytate). InsP6 is involved in many processes such as mRNA export, non-homologous end-joining, endocytosis, ion channel regulation. It also protects cells from TNF-alpha-induced apoptosis. The sequence is that of Inositol-pentakisphosphate 2-kinase (Ippk) from Mus musculus (Mouse).